The following is a 935-amino-acid chain: Pre-mRNA-splicing factor CWC22 homolog (935 aa).

Positions 1–179 are disordered; the sequence is MSRSPSPDSP…PKDLLRTRTG (179 aa). 2 stretches are compositionally biased toward basic and acidic residues: residues 13 to 25 and 49 to 70; these read VRDD…REQS and ESSR…DEKM. A compositionally biased stretch (basic residues) spans 84–148; that stretch reads QHRRHRESRS…RSPARRRSPV (65 aa). The segment covering 159 to 175 has biased composition (basic and acidic residues); that stretch reads PTEEPEKKKNDPKDLLR. Residues 212–400 enclose the MIF4G domain; it reads KKKIHGLVNR…ETAMQIRKDK (189 aa). Positions 463–489 are disordered; the sequence is ADISSDEEEEVEDDDEESEAEEAPRKT. Residues 465 to 483 are compositionally biased toward acidic residues; the sequence is ISSDEEEEVEDDDEESEAE. An MI domain is found at 502–633; that stretch reads AFRREVYLTL…EWKILADVKM (132 aa). A disordered region spans residues 725–935; that stretch reads KAAQSSSDSS…VGSDDRRRRH (211 aa). Positions 729-763 are enriched in low complexity; that stretch reads SSSDSSSDSSDSSDSSDSSGSSDSSDDSSSSSSSD. 2 stretches are compositionally biased toward basic and acidic residues: residues 780 to 891 and 897 to 935; these read KKKE…DRKE and DRRD…RRRH.

Belongs to the CWC22 family.

The protein resides in the nucleus. The protein localises to the nucleus speckle. Its function is as follows. Required for early embryogenesis and tissue differentiation. Required for pre-mRNA splicing and for exon-junction complex (EJC) assembly. Hinders EIF4A3 from non-specifically binding RNA and escorts it to the splicing machinery to promote EJC assembly on mature mRNAs. Through its role in EJC assembly, required for nonsense-mediated mRNA decay. The chain is Pre-mRNA-splicing factor CWC22 homolog from Caenorhabditis briggsae.